The sequence spans 181 residues: Protein OPG161 (181 aa).

Over 1–34 the chain is Intravirion; the sequence is MMTPENDEEQTSVFSATVYGDKIQGKNKRKRVIG. The chain crosses the membrane as a helical span at residues 35-57; sequence LCIRISMVISLLSMITMSAFLIV. The Virion surface portion of the chain corresponds to 58 to 181; the sequence is RLNQCMSANK…SQEVRKYFCT (124 aa). N-linked (GlcNAc...) asparagine; by host glycosylation is present at Asn-135.

It belongs to the orthopoxvirus OPG161 family. As to quaternary structure, homodimer, disulfide-linked. Interacts with protein OPG190. Interacts (via C-terminus) with protein OPG164. Interacts with OPG162.

It localises to the virion membrane. The protein resides in the host membrane. In terms of biological role, forms a complex with OPG162 and OPG190 to coordinate the incorporation of OPG164 into wrapped enveloped virion (EV) membranes and, subsequently, the production of actin tails. Therefore plays an essential role in efficient cell-to-cell spread of viral particles. The protein is Protein OPG161 (OPG161) of Monkeypox virus.